The chain runs to 58 residues: Lantibiotic macedovicin (58 aa).

Residues 1–25 (MMNATENQIFVETVSDQELEMLIGG) constitute a propeptide that is removed on maturation. 2,3-didehydrobutyrine is present on residues Thr-33 and Thr-35. 2 consecutive cross-links (beta-methyllanthionine (Thr-Cys)) follow at residues 33–38 (TLTKDC) and 35–57 (TKDCPNVISSICAGTIITACKNC). Cys-46 and Cys-54 form a disulfide bridge.

Post-translationally, maturation of macedovicin involves the enzymatic dehydration of Thr-33 and Thr-35 into dehydrobutyrine residues, that can form a beta-methyllanthionine bond with Cys-38 and Cys-57, respectively. This is followed by membrane translocation and cleavage of the modified precursor.

It is found in the secreted. Its function is as follows. Lanthionine-containing peptide antibiotic (lantibiotic) active on Gram-positive bacteria. Macedovicin inhibits a broad spectrum of lactic acid bacteria, several food spoilage species (e.g. Clostridium spp.) and oral streptococci. The bactericidal activity of lantibiotics is based on depolarization of energized bacterial cytoplasmic membranes, initiated by the formation of aqueous transmembrane pores. The polypeptide is Lantibiotic macedovicin (Streptococcus macedonicus (strain ACA-DC 198)).